Reading from the N-terminus, the 547-residue chain is Chaperonin GroEL (547 aa).

Residues 30–33 (TLGP), lysine 51, 87–91 (DGTTT), glycine 415, and aspartate 496 each bind ATP.

The protein belongs to the chaperonin (HSP60) family. As to quaternary structure, forms a cylinder of 14 subunits composed of two heptameric rings stacked back-to-back. Interacts with the co-chaperonin GroES.

It is found in the cytoplasm. It carries out the reaction ATP + H2O + a folded polypeptide = ADP + phosphate + an unfolded polypeptide.. Functionally, together with its co-chaperonin GroES, plays an essential role in assisting protein folding. The GroEL-GroES system forms a nano-cage that allows encapsulation of the non-native substrate proteins and provides a physical environment optimized to promote and accelerate protein folding. The chain is Chaperonin GroEL from Chlorobium limicola (strain DSM 245 / NBRC 103803 / 6330).